Consider the following 836-residue polypeptide: Translation initiation factor IF-2 (836 aa).

The segment at 1-234 (MSDTDGKKPL…SLAAMKRKQE (234 aa)) is disordered. Over residues 18-27 (SGQVKQSFSH) the composition is skewed to polar residues. The segment covering 50–60 (SGSSTTTSSPS) has biased composition (low complexity). Over residues 88–156 (KLREVEDAKR…ATRRAEEAKR (69 aa)) the composition is skewed to basic and acidic residues. The segment covering 167–176 (PAESRASAPP) has biased composition (low complexity). A compositionally biased stretch (basic and acidic residues) spans 185–206 (SRKEREREADRDRTTKKDDSRR). In terms of domain architecture, tr-type G spans 333–501 (PRPPIITIMG…NIALQAEILD (169 aa)). Residues 342–349 (GHVDHGKT) form a G1 region. A GTP-binding site is contributed by 342–349 (GHVDHGKT). A G2 region spans residues 367–371 (GITQH). The G3 stretch occupies residues 389–392 (DTPG). Residues 389-393 (DTPGH) and 443-446 (NKID) each bind GTP. The tract at residues 443–446 (NKID) is G4. Residues 479–481 (SAK) form a G5 region.

The protein belongs to the TRAFAC class translation factor GTPase superfamily. Classic translation factor GTPase family. IF-2 subfamily.

Its subcellular location is the cytoplasm. In terms of biological role, one of the essential components for the initiation of protein synthesis. Protects formylmethionyl-tRNA from spontaneous hydrolysis and promotes its binding to the 30S ribosomal subunits. Also involved in the hydrolysis of GTP during the formation of the 70S ribosomal complex. The sequence is that of Translation initiation factor IF-2 from Cereibacter sphaeroides (strain ATCC 17029 / ATH 2.4.9) (Rhodobacter sphaeroides).